The following is a 276-amino-acid chain: uncharacterized protein (276 aa).

The 118-residue stretch at 20–137 folds into the AB hydrolase-1 domain; that stretch reads PVLIFIPGAN…PPINTFLPDS (118 aa).

The protein belongs to the AB hydrolase superfamily.

This is an uncharacterized protein from Staphylococcus aureus (strain MRSA252).